A 193-amino-acid polypeptide reads, in one-letter code: dCTP deaminase, dUMP-forming (193 aa).

DCTP is bound by residues lysine 101 to arginine 106, aspartate 119, threonine 127 to glutamate 129, glutamine 148, tyrosine 162, and glutamine 174. Glutamate 129 acts as the Proton donor/acceptor in catalysis. A disordered region spans residues tyrosine 162–glutamate 184. The segment covering threonine 167–tyrosine 183 has biased composition (polar residues).

Belongs to the dCTP deaminase family. Homotrimer.

The enzyme catalyses dCTP + 2 H2O = dUMP + NH4(+) + diphosphate. It participates in pyrimidine metabolism; dUMP biosynthesis; dUMP from dCTP: step 1/1. Bifunctional enzyme that catalyzes both the deamination of dCTP to dUTP and the hydrolysis of dUTP to dUMP without releasing the toxic dUTP intermediate. This Bifidobacterium longum (strain DJO10A) protein is dCTP deaminase, dUMP-forming.